The primary structure comprises 63 residues: Juvenile hormone esterase, isoform B (63 aa).

Residue asparagine 20 is glycosylated (N-linked (GlcNAc...) asparagine).

This sequence belongs to the type-B carboxylesterase/lipase family. As to expression, fat body, the site of their biosynthesis, and the hemolymph where it is secreted.

It carries out the reaction juvenile hormone I + H2O = juvenile hormone I carboxylate + methanol + H(+). The catalysed reaction is juvenile hormone III + H2O = juvenile hormone III carboxylate + methanol + H(+). Functionally, JH esterase plays a crucial role in the decrease of JH activity in lepidopteran insects, by hydrolyzing the methyl ester of JH. It is also involved in the transport of JH. In Trichoplusia ni (Cabbage looper), this protein is Juvenile hormone esterase, isoform B.